Here is a 592-residue protein sequence, read N- to C-terminus: Aspartate--tRNA ligase (592 aa).

Glu173 contributes to the L-aspartate binding site. The segment at 197 to 200 (QLFK) is aspartate. Arg219 contacts L-aspartate. Residues 219–221 (RDE) and Gln228 each bind ATP. Position 448 (His448) interacts with L-aspartate. Glu482 serves as a coordination point for ATP. L-aspartate is bound at residue Arg489. 534 to 537 (GLDR) contacts ATP.

This sequence belongs to the class-II aminoacyl-tRNA synthetase family. Type 1 subfamily. Homodimer.

It is found in the cytoplasm. The catalysed reaction is tRNA(Asp) + L-aspartate + ATP = L-aspartyl-tRNA(Asp) + AMP + diphosphate. Catalyzes the attachment of L-aspartate to tRNA(Asp) in a two-step reaction: L-aspartate is first activated by ATP to form Asp-AMP and then transferred to the acceptor end of tRNA(Asp). This is Aspartate--tRNA ligase from Shewanella putrefaciens (strain CN-32 / ATCC BAA-453).